Consider the following 84-residue polypeptide: MERSLRKKRIGRVVSDKMEKTIVVAVETKVRHPLYGKTVNRTTKFKVHDENNEAKINDRVSIMETRPLSKDKRWRLVEIVEKAK.

Belongs to the universal ribosomal protein uS17 family. Part of the 30S ribosomal subunit.

Functionally, one of the primary rRNA binding proteins, it binds specifically to the 5'-end of 16S ribosomal RNA. The sequence is that of Small ribosomal subunit protein uS17 from Clostridium beijerinckii (strain ATCC 51743 / NCIMB 8052) (Clostridium acetobutylicum).